We begin with the raw amino-acid sequence, 388 residues long: Methylthioribose-1-phosphate isomerase (388 aa).

D258 acts as the Proton donor in catalysis.

This sequence belongs to the eIF-2B alpha/beta/delta subunits family. MtnA subfamily.

The protein resides in the cytoplasm. The protein localises to the nucleus. The enzyme catalyses 5-(methylsulfanyl)-alpha-D-ribose 1-phosphate = 5-(methylsulfanyl)-D-ribulose 1-phosphate. It functions in the pathway amino-acid biosynthesis; L-methionine biosynthesis via salvage pathway; L-methionine from S-methyl-5-thio-alpha-D-ribose 1-phosphate: step 1/6. Catalyzes the interconversion of methylthioribose-1-phosphate (MTR-1-P) into methylthioribulose-1-phosphate (MTRu-1-P). The polypeptide is Methylthioribose-1-phosphate isomerase (mri-1) (Neurospora crassa (strain ATCC 24698 / 74-OR23-1A / CBS 708.71 / DSM 1257 / FGSC 987)).